The primary structure comprises 101 residues: Small ribosomal subunit protein uS14 (101 aa).

Belongs to the universal ribosomal protein uS14 family. Part of the 30S ribosomal subunit. Contacts proteins S3 and S10.

Its function is as follows. Binds 16S rRNA, required for the assembly of 30S particles and may also be responsible for determining the conformation of the 16S rRNA at the A site. The protein is Small ribosomal subunit protein uS14 of Methylobacterium sp. (strain 4-46).